A 122-amino-acid polypeptide reads, in one-letter code: Small ribosomal subunit protein bS6 (122 aa).

A disordered region spans residues 96 to 122 (ETAPSPMMKAVQKEDAAKSHRTEAPAA). Residues 106 to 122 (VQKEDAAKSHRTEAPAA) show a composition bias toward basic and acidic residues.

Belongs to the bacterial ribosomal protein bS6 family.

In terms of biological role, binds together with bS18 to 16S ribosomal RNA. The polypeptide is Small ribosomal subunit protein bS6 (Herminiimonas arsenicoxydans).